The primary structure comprises 664 residues: Metal-nicotianamine transporter YSL2 (664 aa).

14 helical membrane passes run 31–51 (ITVR…VICL), 55–75 (LTTG…FVFL), 103–123 (CAVA…LLGL), 147–167 (GVGW…VVLV), 209–229 (GFIK…FYSG), 268–288 (LVNL…WPLI), 314–334 (FICI…ILFF), 378–398 (IPLW…IIAI), 409–429 (FVLV…YGAG), 457–477 (VVAG…SADL), 496–516 (VAQA…FFLF), 549–569 (SALP…AVAA), 594–614 (FLVG…VYVW), and 629–649 (VASG…LLAL).

This sequence belongs to the YSL (TC 2.A.67.2) family. Expressed in roots, leaves and weakly in shoots. Restricted to the veins, to the central cylinder of the young roots and to the pericycle and the endodermis cells facing the meta-xylem tubes in older roots. Expressed in the vasculature of sepals, petals, anthers, stigma and siliques, but not in developing seeds or in meristematic zones.

The protein localises to the cell membrane. May be involved in the lateral transport of nicotianamine-chelated metals in the vasculature. The sequence is that of Metal-nicotianamine transporter YSL2 (YSL2) from Arabidopsis thaliana (Mouse-ear cress).